The sequence spans 428 residues: Cytokine-dependent hematopoietic cell linker (428 aa).

The interval 1–22 (MNRQGNRKTTKEGSNDLKFQNF) is disordered. Phosphotyrosine; by LYN is present on residues Y69 and Y96. 2 disordered regions span residues 135-198 (DKPI…EVQR) and 244-271 (SSSFTTSNHSVQNRDHRGGMQPCSPQRC). The mediates interaction with PLCG1; essential for BCR signaling; involved in restoration of BCR-induced calcium response and ERK2 and JNK2 activation in BLNK-deficient cells expressing LAT stretch occupies residues 159 to 164 (PLPPPR). The mediates interaction with LAT, GRB2, and FGR; involved in translocation to the glycolipid-enriched microdomain and restoration of BCR-induced calcium response in BLNK-deficient DT40 cells expressing LAT stretch occupies residues 178-180 (PEP). A compositionally biased stretch (low complexity) spans 244-253 (SSSFTTSNHS). The 111-residue stretch at 309–419 (WYIGEYSRQA…RKQCHLTQPL (111 aa)) folds into the SH2 domain.

When phosphorylated, interacts with PLCG1, PLCG2, GRB2, VAV and LAT. Interacts with LBR and AGO2. Interacts with FGR. Part of a complex consisting of CLNK, SKAP1 and FYB1. Interacts (via SH2 domain) with FYB1; this interaction allows SKAP1 and FYB1 to promote tyrosine phosphorylation of CLNK by LYN. Interacts (via SH2 domain) with MAP4K1. Tyrosine-phosphorylated upon BCR cross-linking. Tyrosine phosphorylation at both Tyr-69 and Tyr-96 are required for BCR-induced calcium response and are essential to restore PLCG2-mediated signaling in BLNK-deficient DT40 cells, but this phosphorylation is dispensable in cells expressing LAT. Interacts with the SH2 domain of PLCG1 via phosphorylated Tyr-96. Tyrosine phosphorylation is increased when complexed with SKAP1 and FYB1.

Its subcellular location is the cytoplasm. An adapter protein which plays a role in the regulation of immunoreceptor signaling, including PLC-gamma-mediated B-cell antigen receptor (BCR) signaling and FC-epsilon R1-mediated mast cell degranulation. Together with FGR, it acts as a negative regulator of natural killer cell-activating receptors and inhibits interferon-gamma production. Acts as a positive regulator of both T-cell receptor and natural killer T (NKT) cell receptor signaling in CD4-positive NKT cells. Together with MAP4K1, it enhances CD3-triggered activation of T-cells and subsequent IL2 production. May be involved in tumor necrosis factor induced cell death by promoting reactive oxidative species generation, and MLKL oligomerization, ultimately leading to necrosis. Involved in phosphorylation of LAT. May be involved in high affinity immunoglobulin epsilon receptor signaling in mast cells. This is Cytokine-dependent hematopoietic cell linker (CLNK) from Homo sapiens (Human).